The following is a 502-amino-acid chain: Hexokinase-9 (502 aa).

Residues 5–24 (AALASAAMAAAAVAVVSTVL) traverse the membrane as a helical segment. Residues 37–488 (RAEAVLLRDL…SGVGAALLAA (452 aa)) form the Hexokinase domain. The hexokinase small subdomain stretch occupies residues 92–230 (SGGEKGMFYA…GLDMKVTALV (139 aa)). ADP contacts are provided by glycine 106, threonine 107, and asparagine 108. Positions 196, 197, 231, and 232 each coordinate D-glucose. The segment at 231–477 (NDTVGTLAAG…PSVMIKHVND (247 aa)) is hexokinase large subdomain. An ADP-binding site is contributed by threonine 255. D-glucose is bound by residues asparagine 258, glutamate 286, and glutamate 317. Position 442 (glycine 442) interacts with ADP.

It belongs to the hexokinase family. Expressed in roots, leaves, flowers, immature seeds, endosperm and seed coat.

The protein localises to the plastid. It localises to the chloroplast outer membrane. The catalysed reaction is a D-hexose + ATP = a D-hexose 6-phosphate + ADP + H(+). It carries out the reaction D-fructose + ATP = D-fructose 6-phosphate + ADP + H(+). The enzyme catalyses D-glucose + ATP = D-glucose 6-phosphate + ADP + H(+). It participates in carbohydrate metabolism; hexose metabolism. Its pathway is carbohydrate degradation; glycolysis; D-glyceraldehyde 3-phosphate and glycerone phosphate from D-glucose: step 1/4. In terms of biological role, fructose and glucose phosphorylating enzyme. This chain is Hexokinase-9 (HXK9), found in Oryza sativa subsp. japonica (Rice).